A 274-amino-acid chain; its full sequence is Large ribosomal subunit protein uL2 (274 aa).

A disordered region spans residues 223-274 (VAMNPVDHPHGGGEGRTSGGRHPVTPWGVPTKGYKTRSNKRTDKYIVRRRNK).

The protein belongs to the universal ribosomal protein uL2 family. Part of the 50S ribosomal subunit. Forms a bridge to the 30S subunit in the 70S ribosome.

In terms of biological role, one of the primary rRNA binding proteins. Required for association of the 30S and 50S subunits to form the 70S ribosome, for tRNA binding and peptide bond formation. It has been suggested to have peptidyltransferase activity; this is somewhat controversial. Makes several contacts with the 16S rRNA in the 70S ribosome. The protein is Large ribosomal subunit protein uL2 of Shewanella sp. (strain ANA-3).